The chain runs to 210 residues: Holliday junction resolvase RecU (210 aa).

The Mg(2+) site is built by threonine 87, aspartate 89, glutamate 102, and glutamine 121.

It belongs to the RecU family. The cofactor is Mg(2+).

Its subcellular location is the cytoplasm. The catalysed reaction is Endonucleolytic cleavage at a junction such as a reciprocal single-stranded crossover between two homologous DNA duplexes (Holliday junction).. Functionally, endonuclease that resolves Holliday junction intermediates in genetic recombination. Cleaves mobile four-strand junctions by introducing symmetrical nicks in paired strands. Promotes annealing of linear ssDNA with homologous dsDNA. Required for DNA repair, homologous recombination and chromosome segregation. The chain is Holliday junction resolvase RecU from Lactobacillus delbrueckii subsp. bulgaricus (strain ATCC 11842 / DSM 20081 / BCRC 10696 / JCM 1002 / NBRC 13953 / NCIMB 11778 / NCTC 12712 / WDCM 00102 / Lb 14).